Here is a 764-residue protein sequence, read N- to C-terminus: 1,4-alpha-glucan branching enzyme GlgB (764 aa).

The active-site Nucleophile is the D434. E487 serves as the catalytic Proton donor.

It belongs to the glycosyl hydrolase 13 family. GlgB subfamily. As to quaternary structure, monomer.

The catalysed reaction is Transfers a segment of a (1-&gt;4)-alpha-D-glucan chain to a primary hydroxy group in a similar glucan chain.. Its pathway is glycan biosynthesis; glycogen biosynthesis. In terms of biological role, catalyzes the formation of the alpha-1,6-glucosidic linkages in glycogen by scission of a 1,4-alpha-linked oligosaccharide from growing alpha-1,4-glucan chains and the subsequent attachment of the oligosaccharide to the alpha-1,6 position. The protein is 1,4-alpha-glucan branching enzyme GlgB of Nostoc sp. (strain PCC 7120 / SAG 25.82 / UTEX 2576).